A 586-amino-acid polypeptide reads, in one-letter code: MRTKYCGNIRISHVNKKVKLCGWVHKVRNLGQFIFVDMRDYTGLVQVIFELKNYKIFKKALNLRNEFCIQVFGTVQKREKKNQNIKIRTGEIEILANVLNILNTSKSLPLNFTQENNDDSRLKYRYLDLRSFDILENLKIRNKITYLIRNFMTKKNFLDIETPILTKSTPEGARDYLVPSRNHYGKFYALPQSPQLFKQILMISGIDRYYQIVKCFRDEDLRSDRQPEFTQIDIEVSFMSAKKIRNLVENLIKKLWLEIRNINLKKFPQISFHEAMKKYGSDKPDLRNPIEIIDVSNIFKDKKFISFFNLNPQKNNRIALLCISKGAHLSRKKIDDYTKYVQRFDAKKLFYMKIKECKLGCLGIHSSIKNILDEIILKEIIEKSQSKNGDILFLIADQEHIVNKSLGMLRLKIGIDLNITKKNRWEPLWIVNFPMFDKDIQGNLSSVHHPFTAVKNMDREILKNSPDLAISDSYDLIINGYEIGGGSVRIHDVNMQKQVFDIIGIKKSMQNEKFGFLIEALKYGAPPHAGIALGLDRIVMLLTNSKNIRDVIAFPKTTSATCLMTNSPSTVDNLLLQELAIKHLKK.

Glutamate 171 provides a ligand contact to L-aspartate. The tract at residues 195-198 is aspartate; that stretch reads QLFK. Position 217 (arginine 217) interacts with L-aspartate. ATP-binding positions include 217–219 and glutamine 226; that span reads RDE. Histidine 448 serves as a coordination point for L-aspartate. Glutamate 482 contacts ATP. An L-aspartate-binding site is contributed by arginine 489. 534–537 contacts ATP; sequence GLDR.

The protein belongs to the class-II aminoacyl-tRNA synthetase family. Type 1 subfamily. In terms of assembly, homodimer.

The protein resides in the cytoplasm. The catalysed reaction is tRNA(Asp) + L-aspartate + ATP = L-aspartyl-tRNA(Asp) + AMP + diphosphate. In terms of biological role, catalyzes the attachment of L-aspartate to tRNA(Asp) in a two-step reaction: L-aspartate is first activated by ATP to form Asp-AMP and then transferred to the acceptor end of tRNA(Asp). The sequence is that of Aspartate--tRNA ligase from Buchnera aphidicola subsp. Acyrthosiphon pisum (strain APS) (Acyrthosiphon pisum symbiotic bacterium).